A 1071-amino-acid chain; its full sequence is Carbamoyl phosphate synthase large chain (1071 aa).

The segment at 1–403 (MPKRTDLKSI…SFQKALRGLE (403 aa)) is carboxyphosphate synthetic domain. Positions 129, 169, 175, 176, 208, 210, 215, 241, 242, 243, 285, and 299 each coordinate ATP. The 196-residue stretch at 133-328 (KEAMEKIGLS…IAKVAAKLAV (196 aa)) folds into the ATP-grasp 1 domain. Residues Q285, E299, and N301 each coordinate Mg(2+). Mn(2+) contacts are provided by Q285, E299, and N301. An oligomerization domain region spans residues 404–548 (TGLCGFNPRS…YSTYEEECEA (145 aa)). A carbamoyl phosphate synthetic domain region spans residues 549-930 (RPSDRKKVMI…AYYKAQLGAG (382 aa)). Positions 673–864 (QKVLNDLGLR…LAKVGARCMA (192 aa)) constitute an ATP-grasp 2 domain. ATP-binding residues include R709, F748, L750, E755, G780, I781, H782, S783, Q823, and E835. Mg(2+) contacts are provided by Q823, E835, and N837. Mn(2+) contacts are provided by Q823, E835, and N837. The MGS-like domain occupies 931 to 1071 (ERLNPTGKIF…ELHGRLKNRS (141 aa)). The allosteric domain stretch occupies residues 931 to 1071 (ERLNPTGKIF…ELHGRLKNRS (141 aa)).

Belongs to the CarB family. As to quaternary structure, composed of two chains; the small (or glutamine) chain promotes the hydrolysis of glutamine to ammonia, which is used by the large (or ammonia) chain to synthesize carbamoyl phosphate. Tetramer of heterodimers (alpha,beta)4. Requires Mg(2+) as cofactor. Mn(2+) serves as cofactor.

The enzyme catalyses hydrogencarbonate + L-glutamine + 2 ATP + H2O = carbamoyl phosphate + L-glutamate + 2 ADP + phosphate + 2 H(+). It carries out the reaction hydrogencarbonate + NH4(+) + 2 ATP = carbamoyl phosphate + 2 ADP + phosphate + 2 H(+). Its pathway is amino-acid biosynthesis; L-arginine biosynthesis; carbamoyl phosphate from bicarbonate: step 1/1. It participates in pyrimidine metabolism; UMP biosynthesis via de novo pathway; (S)-dihydroorotate from bicarbonate: step 1/3. Its function is as follows. Large subunit of the glutamine-dependent carbamoyl phosphate synthetase (CPSase). CPSase catalyzes the formation of carbamoyl phosphate from the ammonia moiety of glutamine, carbonate, and phosphate donated by ATP, constituting the first step of 2 biosynthetic pathways, one leading to arginine and/or urea and the other to pyrimidine nucleotides. The large subunit (synthetase) binds the substrates ammonia (free or transferred from glutamine from the small subunit), hydrogencarbonate and ATP and carries out an ATP-coupled ligase reaction, activating hydrogencarbonate by forming carboxy phosphate which reacts with ammonia to form carbamoyl phosphate. This is Carbamoyl phosphate synthase large chain from Neisseria meningitidis serogroup A / serotype 4A (strain DSM 15465 / Z2491).